A 151-amino-acid chain; its full sequence is Large ribosomal subunit protein uL13 (151 aa).

This sequence belongs to the universal ribosomal protein uL13 family. As to quaternary structure, part of the 50S ribosomal subunit.

In terms of biological role, this protein is one of the early assembly proteins of the 50S ribosomal subunit, although it is not seen to bind rRNA by itself. It is important during the early stages of 50S assembly. This Petrotoga mobilis (strain DSM 10674 / SJ95) protein is Large ribosomal subunit protein uL13.